A 465-amino-acid polypeptide reads, in one-letter code: Cysteine--tRNA ligase (465 aa).

Cys-29 is a Zn(2+) binding site. A 'HIGH' region motif is present at residues 31–41 (PTVYNYIHIGN). Zn(2+) is bound by residues Cys-209, His-234, and Glu-238. Positions 266 to 270 (KMSKS) match the 'KMSKS' region motif. Residue Lys-269 participates in ATP binding. Ser-270 is subject to Phosphoserine.

Belongs to the class-I aminoacyl-tRNA synthetase family. Monomer. It depends on Zn(2+) as a cofactor.

The protein localises to the cytoplasm. It catalyses the reaction tRNA(Cys) + L-cysteine + ATP = L-cysteinyl-tRNA(Cys) + AMP + diphosphate. The chain is Cysteine--tRNA ligase from Bacillus cereus (strain G9842).